Reading from the N-terminus, the 331-residue chain is 7,8-didemethyl-8-hydroxy-5-deazariboflavin synthase (331 aa).

In terms of domain architecture, Radical SAM core spans 6–244 (ITFSKNAFLP…ADVAVQIPPN (239 aa)). Residues Cys20, Cys24, and Cys27 each coordinate [4Fe-4S] cluster.

This sequence belongs to the radical SAM superfamily. CofG family. As to quaternary structure, consists of two subunits, CofG and CofH. The cofactor is [4Fe-4S] cluster.

The enzyme catalyses 5-amino-5-(4-hydroxybenzyl)-6-(D-ribitylimino)-5,6-dihydrouracil + S-adenosyl-L-methionine = 7,8-didemethyl-8-hydroxy-5-deazariboflavin + 5'-deoxyadenosine + L-methionine + NH4(+) + H(+). It participates in cofactor biosynthesis; coenzyme F0 biosynthesis. Functionally, catalyzes the radical-mediated synthesis of 7,8-didemethyl-8-hydroxy-5-deazariboflavin from 5-amino-5-(4-hydroxybenzyl)-6-(D-ribitylimino)-5,6-dihydrouracil. The sequence is that of 7,8-didemethyl-8-hydroxy-5-deazariboflavin synthase from Methanoculleus marisnigri (strain ATCC 35101 / DSM 1498 / JR1).